Consider the following 504-residue polypeptide: Cytochrome P450 6a9 (504 aa).

Heme is bound at residue Cys449.

This sequence belongs to the cytochrome P450 family. Heme serves as cofactor.

It is found in the endoplasmic reticulum membrane. Its subcellular location is the microsome membrane. In terms of biological role, involved in the metabolism of insect hormones and in the breakdown of synthetic insecticides. This Drosophila melanogaster (Fruit fly) protein is Cytochrome P450 6a9 (Cyp6a9).